The chain runs to 267 residues: Tetrahydromethanopterin S-methyltransferase subunit C (267 aa).

A run of 8 helical transmembrane segments spans residues L18–V38, I39–I59, Y76–V96, I99–L119, I138–T158, L163–I183, F209–V229, and S230–E250.

Belongs to the MtrC family. As to quaternary structure, the complex is composed of 8 subunits; MtrA, MtrB, MtrC, MtrD, MtrE, MtrF, MtrG and MtrH.

The protein resides in the cell membrane. The catalysed reaction is 5-methyl-5,6,7,8-tetrahydromethanopterin + coenzyme M + 2 Na(+)(in) = 5,6,7,8-tetrahydromethanopterin + methyl-coenzyme M + 2 Na(+)(out). It participates in one-carbon metabolism; methanogenesis from CO(2); methyl-coenzyme M from 5,10-methylene-5,6,7,8-tetrahydromethanopterin: step 2/2. In terms of biological role, part of a complex that catalyzes the formation of methyl-coenzyme M and tetrahydromethanopterin from coenzyme M and methyl-tetrahydromethanopterin. This is an energy-conserving, sodium-ion translocating step. This chain is Tetrahydromethanopterin S-methyltransferase subunit C, found in Methanothermobacter marburgensis (strain ATCC BAA-927 / DSM 2133 / JCM 14651 / NBRC 100331 / OCM 82 / Marburg) (Methanobacterium thermoautotrophicum).